Consider the following 488-residue polypeptide: Glutamyl-tRNA(Gln) amidotransferase subunit A (488 aa).

Residues K77 and S152 each act as charge relay system in the active site. S176 acts as the Acyl-ester intermediate in catalysis.

It belongs to the amidase family. GatA subfamily. In terms of assembly, heterotrimer of A, B and C subunits.

The catalysed reaction is L-glutamyl-tRNA(Gln) + L-glutamine + ATP + H2O = L-glutaminyl-tRNA(Gln) + L-glutamate + ADP + phosphate + H(+). Allows the formation of correctly charged Gln-tRNA(Gln) through the transamidation of misacylated Glu-tRNA(Gln) in organisms which lack glutaminyl-tRNA synthetase. The reaction takes place in the presence of glutamine and ATP through an activated gamma-phospho-Glu-tRNA(Gln). This is Glutamyl-tRNA(Gln) amidotransferase subunit A from Streptococcus pyogenes serotype M1.